The following is a 515-amino-acid chain: ATP synthase subunit alpha (515 aa).

Gly169 to Thr176 serves as a coordination point for ATP.

The protein belongs to the ATPase alpha/beta chains family. In terms of assembly, F-type ATPases have 2 components, CF(1) - the catalytic core - and CF(0) - the membrane proton channel. CF(1) has five subunits: alpha(3), beta(3), gamma(1), delta(1), epsilon(1). CF(0) has three main subunits: a(1), b(2) and c(9-12). The alpha and beta chains form an alternating ring which encloses part of the gamma chain. CF(1) is attached to CF(0) by a central stalk formed by the gamma and epsilon chains, while a peripheral stalk is formed by the delta and b chains.

The protein resides in the cell inner membrane. It catalyses the reaction ATP + H2O + 4 H(+)(in) = ADP + phosphate + 5 H(+)(out). Produces ATP from ADP in the presence of a proton gradient across the membrane. The alpha chain is a regulatory subunit. This chain is ATP synthase subunit alpha, found in Neisseria meningitidis serogroup A / serotype 4A (strain DSM 15465 / Z2491).